A 525-amino-acid chain; its full sequence is Pre-mRNA-processing factor 19 homolog 2 (525 aa).

Residues 1–70 (MNCAISGEVP…PKTLHTASIP (70 aa)) form the U-box domain. 7 WD repeats span residues 220–261 (TNKP…STLT), 262–301 (GHSK…NYAC), 307–346 (DHSA…CLAQ), 351–390 (SKNV…NVAK), 393–431 (GHTG…NFKS), 433–469 (LSAD…AEWN), and 478–517 (SGTG…KANV). The short motif at 409 to 424 (FLATAAEDGVRLWDLR) is the DWD box element.

Belongs to the WD repeat PRP19 family. Homotetramer. Component of the multiprotein assembly MOS4-associated complex (MAC) at least composed of MOS4, CDC5, PRL1 and PRP19 which is related to the PRP19C/Prp19 complex/NTC/Nineteen complex identified in other organisms. Associated with the spliceosome.

The protein resides in the nucleus. The enzyme catalyses S-ubiquitinyl-[E2 ubiquitin-conjugating enzyme]-L-cysteine + [acceptor protein]-L-lysine = [E2 ubiquitin-conjugating enzyme]-L-cysteine + N(6)-ubiquitinyl-[acceptor protein]-L-lysine.. Its pathway is protein modification; protein ubiquitination. Its function is as follows. Probable ubiquitin-protein ligase which is mainly involved pre-mRNA splicing and DNA repair. Component of the MAC complex that probably regulates defense responses through transcriptional control and thereby is essential for plant innate immunity. In Arabidopsis thaliana (Mouse-ear cress), this protein is Pre-mRNA-processing factor 19 homolog 2 (PRP19B).